A 223-amino-acid polypeptide reads, in one-letter code: Adapter protein MecA (223 aa).

This sequence belongs to the MecA family. Homodimer.

Its function is as follows. Enables the recognition and targeting of unfolded and aggregated proteins to the ClpC protease or to other proteins involved in proteolysis. The sequence is that of Adapter protein MecA from Limosilactobacillus reuteri (strain DSM 20016) (Lactobacillus reuteri).